The sequence spans 619 residues: Probable serine/threonine-protein kinase WNK8 (619 aa).

A compositionally biased stretch (basic and acidic residues) spans 1–14 (MSGARRCGDRRSER). Residues 1 to 30 (MSGARRCGDRRSERSSVVGDNRNGYVETDP) are disordered. Residues 35 to 291 (GRLSEVLGKG…AEELLLDPFL (257 aa)) form the Protein kinase domain. ATP contacts are provided by residues 115–118 (TELF) and lysine 163. Catalysis depends on aspartate 180, which acts as the Proton acceptor. Disordered stretches follow at residues 293–335 (PPQN…AKTT), 419–464 (YADD…PGPH), 508–555 (CSAS…SMVD), and 585–619 (GFRD…HYMF). Residues 419-428 (YADDDDDDDV) are compositionally biased toward acidic residues. A compositionally biased stretch (low complexity) spans 439–448 (SSSPTSSQGS). The span at 602–619 (QHRRRSSSKVDHKHHYMF) shows a compositional bias: basic residues.

Belongs to the protein kinase superfamily. Ser/Thr protein kinase family. WNK subfamily.

It catalyses the reaction L-seryl-[protein] + ATP = O-phospho-L-seryl-[protein] + ADP + H(+). The catalysed reaction is L-threonyl-[protein] + ATP = O-phospho-L-threonyl-[protein] + ADP + H(+). The chain is Probable serine/threonine-protein kinase WNK8 (WNK8) from Oryza sativa subsp. japonica (Rice).